Reading from the N-terminus, the 144-residue chain is Transcription antitermination protein NusB (144 aa).

It belongs to the NusB family.

Its function is as follows. Involved in transcription antitermination. Required for transcription of ribosomal RNA (rRNA) genes. Binds specifically to the boxA antiterminator sequence of the ribosomal RNA (rrn) operons. The sequence is that of Transcription antitermination protein NusB from Histophilus somni (strain 2336) (Haemophilus somnus).